The following is a 451-amino-acid chain: 2-succinylbenzoate--CoA ligase (451 aa).

This sequence belongs to the ATP-dependent AMP-binding enzyme family. MenE subfamily.

The enzyme catalyses 2-succinylbenzoate + ATP + CoA = 2-succinylbenzoyl-CoA + AMP + diphosphate. It participates in quinol/quinone metabolism; 1,4-dihydroxy-2-naphthoate biosynthesis; 1,4-dihydroxy-2-naphthoate from chorismate: step 5/7. Its pathway is quinol/quinone metabolism; menaquinone biosynthesis. Functionally, converts 2-succinylbenzoate (OSB) to 2-succinylbenzoyl-CoA (OSB-CoA). In Lactococcus lactis subsp. lactis (strain IL1403) (Streptococcus lactis), this protein is 2-succinylbenzoate--CoA ligase.